A 256-amino-acid polypeptide reads, in one-letter code: Undecaprenyl-diphosphatase 2 (256 aa).

The next 8 membrane-spanning stretches (helical) occupy residues 1 to 21 (MDIF…FLPI), 38 to 58 (ATAT…LAVL), 70 to 90 (LNLW…AFIF), 97 to 117 (LFNV…FLLL), 134 to 154 (VTYK…IPGT), 175 to 195 (AEFS…YDLL), 208 to 228 (ALAV…KLFI), and 236 to 256 (FVSF…IAYV).

This sequence belongs to the UppP family.

The protein localises to the cell inner membrane. It carries out the reaction di-trans,octa-cis-undecaprenyl diphosphate + H2O = di-trans,octa-cis-undecaprenyl phosphate + phosphate + H(+). Catalyzes the dephosphorylation of undecaprenyl diphosphate (UPP). Confers resistance to bacitracin. The sequence is that of Undecaprenyl-diphosphatase 2 from Pseudoalteromonas translucida (strain TAC 125).